Here is a 357-residue protein sequence, read N- to C-terminus: Peptide chain release factor 1 (357 aa).

An N5-methylglutamine modification is found at glutamine 236. A compositionally biased stretch (basic and acidic residues) spans 283 to 309 (ERRKKDQERANNRREQIGSGDRSERIR). The segment at 283-313 (ERRKKDQERANNRREQIGSGDRSERIRTYNF) is disordered.

It belongs to the prokaryotic/mitochondrial release factor family. Methylated by PrmC. Methylation increases the termination efficiency of RF1.

The protein resides in the cytoplasm. Peptide chain release factor 1 directs the termination of translation in response to the peptide chain termination codons UAG and UAA. In Rickettsia bellii (strain OSU 85-389), this protein is Peptide chain release factor 1.